Reading from the N-terminus, the 171-residue chain is Adenine phosphoribosyltransferase (171 aa).

Belongs to the purine/pyrimidine phosphoribosyltransferase family. In terms of assembly, homodimer.

The protein resides in the cytoplasm. The catalysed reaction is AMP + diphosphate = 5-phospho-alpha-D-ribose 1-diphosphate + adenine. It participates in purine metabolism; AMP biosynthesis via salvage pathway; AMP from adenine: step 1/1. Catalyzes a salvage reaction resulting in the formation of AMP, that is energically less costly than de novo synthesis. This chain is Adenine phosphoribosyltransferase, found in Geotalea uraniireducens (strain Rf4) (Geobacter uraniireducens).